The primary structure comprises 456 residues: ATP-dependent protease ATPase subunit HslU (456 aa).

ATP is bound by residues I18, 60–65 (GVGKTE), D270, E334, and R406.

This sequence belongs to the ClpX chaperone family. HslU subfamily. A double ring-shaped homohexamer of HslV is capped on each side by a ring-shaped HslU homohexamer. The assembly of the HslU/HslV complex is dependent on binding of ATP.

The protein resides in the cytoplasm. In terms of biological role, ATPase subunit of a proteasome-like degradation complex; this subunit has chaperone activity. The binding of ATP and its subsequent hydrolysis by HslU are essential for unfolding of protein substrates subsequently hydrolyzed by HslV. HslU recognizes the N-terminal part of its protein substrates and unfolds these before they are guided to HslV for hydrolysis. This chain is ATP-dependent protease ATPase subunit HslU, found in Exiguobacterium sibiricum (strain DSM 17290 / CCUG 55495 / CIP 109462 / JCM 13490 / 255-15).